The sequence spans 261 residues: Cytochrome c oxidase subunit 3 (261 aa).

The Mitochondrial matrix segment spans residues 1 to 15; that stretch reads MTHQTHAYHMVNPSP. Residues 16–34 form a helical membrane-spanning segment; that stretch reads WPLTGALSALLMTSGLIMW. Over 35–40 the chain is Mitochondrial intermembrane; it reads FHFNST. Residues 41 to 66 form a helical membrane-spanning segment; sequence ALLTLGLTTNMLTMYQWWRDVIREST. Residues 67-72 are Mitochondrial matrix-facing; sequence FQGHHT. The chain crosses the membrane as a helical span at residues 73 to 105; the sequence is PAVQKGLRYGMILFIISEVLFFTGFFWAFYHSS. Topologically, residues 106-128 are mitochondrial intermembrane; sequence LAPTPELGGCWPPTGIHPLNPLE. The chain crosses the membrane as a helical span at residues 129-152; the sequence is VPLLNTSVLLASGVSITWAHHSLM. Over 153-155 the chain is Mitochondrial matrix; sequence EGN. The chain crosses the membrane as a helical span at residues 156 to 183; that stretch reads RYHMLQALFITIALGVYFTLLQASEYYE. Residues 184-190 are Mitochondrial intermembrane-facing; that stretch reads APFTISD. Residues 191–223 traverse the membrane as a helical segment; sequence GVYGSTFFVATGFHGLHVIIGSTFLIVCFFRQL. Over 224 to 232 the chain is Mitochondrial matrix; sequence KFHFTSSHH. Residues 233–256 form a helical membrane-spanning segment; it reads FGFEAAAWYWHFVDVVWLFLYMSI. Topologically, residues 257–261 are mitochondrial intermembrane; that stretch reads YWWGS.

The protein belongs to the cytochrome c oxidase subunit 3 family. Component of the cytochrome c oxidase (complex IV, CIV), a multisubunit enzyme composed of 14 subunits. The complex is composed of a catalytic core of 3 subunits MT-CO1, MT-CO2 and MT-CO3, encoded in the mitochondrial DNA, and 11 supernumerary subunits COX4I, COX5A, COX5B, COX6A, COX6B, COX6C, COX7A, COX7B, COX7C, COX8 and NDUFA4, which are encoded in the nuclear genome. The complex exists as a monomer or a dimer and forms supercomplexes (SCs) in the inner mitochondrial membrane with NADH-ubiquinone oxidoreductase (complex I, CI) and ubiquinol-cytochrome c oxidoreductase (cytochrome b-c1 complex, complex III, CIII), resulting in different assemblies (supercomplex SCI(1)III(2)IV(1) and megacomplex MCI(2)III(2)IV(2)).

The protein localises to the mitochondrion inner membrane. It catalyses the reaction 4 Fe(II)-[cytochrome c] + O2 + 8 H(+)(in) = 4 Fe(III)-[cytochrome c] + 2 H2O + 4 H(+)(out). In terms of biological role, component of the cytochrome c oxidase, the last enzyme in the mitochondrial electron transport chain which drives oxidative phosphorylation. The respiratory chain contains 3 multisubunit complexes succinate dehydrogenase (complex II, CII), ubiquinol-cytochrome c oxidoreductase (cytochrome b-c1 complex, complex III, CIII) and cytochrome c oxidase (complex IV, CIV), that cooperate to transfer electrons derived from NADH and succinate to molecular oxygen, creating an electrochemical gradient over the inner membrane that drives transmembrane transport and the ATP synthase. Cytochrome c oxidase is the component of the respiratory chain that catalyzes the reduction of oxygen to water. Electrons originating from reduced cytochrome c in the intermembrane space (IMS) are transferred via the dinuclear copper A center (CU(A)) of subunit 2 and heme A of subunit 1 to the active site in subunit 1, a binuclear center (BNC) formed by heme A3 and copper B (CU(B)). The BNC reduces molecular oxygen to 2 water molecules using 4 electrons from cytochrome c in the IMS and 4 protons from the mitochondrial matrix. The sequence is that of Cytochrome c oxidase subunit 3 (MT-CO3) from Ovis aries (Sheep).